A 517-amino-acid polypeptide reads, in one-letter code: Protein disulfide-isomerase A5 (517 aa).

An N-terminal signal peptide occupies residues 1–21 (MARAWGLLLAIGVILPTWLSS). 4 cysteine pairs are disulfide-bonded: Cys83–Cys92, Cys180–Cys183, Cys303–Cys306, and Cys424–Cys427. Thioredoxin domains are found at residues 132–259 (FLKD…NPQP), 268–382 (PWAD…NPEA), and 376–504 (WMQN…TLRE). Positions 514–517 (REDL) match the Prevents secretion from ER motif.

This sequence belongs to the protein disulfide isomerase family.

Its subcellular location is the endoplasmic reticulum lumen. The enzyme catalyses Catalyzes the rearrangement of -S-S- bonds in proteins.. In Rattus norvegicus (Rat), this protein is Protein disulfide-isomerase A5 (Pdia5).